We begin with the raw amino-acid sequence, 185 residues long: Elongation factor P (185 aa).

It belongs to the elongation factor P family.

The protein localises to the cytoplasm. The protein operates within protein biosynthesis; polypeptide chain elongation. Functionally, involved in peptide bond synthesis. Stimulates efficient translation and peptide-bond synthesis on native or reconstituted 70S ribosomes in vitro. Probably functions indirectly by altering the affinity of the ribosome for aminoacyl-tRNA, thus increasing their reactivity as acceptors for peptidyl transferase. This is Elongation factor P from Thermoanaerobacter sp. (strain X514).